A 340-amino-acid polypeptide reads, in one-letter code: Porphobilinogen deaminase (340 aa).

C258 carries the post-translational modification S-(dipyrrolylmethanemethyl)cysteine.

The protein belongs to the HMBS family. The cofactor is dipyrromethane.

The enzyme catalyses 4 porphobilinogen + H2O = hydroxymethylbilane + 4 NH4(+). Its pathway is porphyrin-containing compound metabolism; protoporphyrin-IX biosynthesis; coproporphyrinogen-III from 5-aminolevulinate: step 2/4. Functionally, tetrapolymerization of the monopyrrole PBG into the hydroxymethylbilane pre-uroporphyrinogen in several discrete steps. In Candida albicans (strain SC5314 / ATCC MYA-2876) (Yeast), this protein is Porphobilinogen deaminase (HEM3).